We begin with the raw amino-acid sequence, 694 residues long: Protein NPGR1 (694 aa).

The tract at residues 12-40 is disordered; the sequence is FEDQPGSPESLATRDFSASGLSSRNGGGD. TPR repeat units lie at residues 32-65, 66-101, 135-168, 188-221, 307-340, 551-584, 585-618, 620-654, and 655-688; these read LSSR…SLNY, EEAR…TPRI, LEAI…VENA, QKAL…PWNL, GERW…SESR, TEAW…CYYS, PRGW…EPDH, PSIV…DPRN, and HDAW…ELSA.

In terms of assembly, interacts with calmodulin in a calcium-dependent manner. As to expression, expressed in pollen, flowers, fruits and leaves.

This chain is Protein NPGR1, found in Arabidopsis thaliana (Mouse-ear cress).